The chain runs to 538 residues: Spindle pole body protein CSA6 (538 aa).

2 disordered regions span residues 1 to 31 (MEDS…TSDL) and 57 to 129 (QNIS…KYQD). 2 stretches are compositionally biased toward basic and acidic residues: residues 18 to 30 (PEIK…KTSD) and 57 to 68 (QNISDSEHDLTP). Polar residues-rich tracts occupy residues 86–96 (KFSSSIPQKPT) and 104–122 (TSPT…SGPN). Positions 144–237 (KQEQNLKLEN…RNERDELVKD (94 aa)) form a coiled coil. Residues 304-323 (KKISEPSAAVEKDTTSEDKT) show a composition bias toward basic and acidic residues. Disordered stretches follow at residues 304-338 (KKIS…TPRM) and 355-458 (SSNN…STKY). Composition is skewed to polar residues over residues 355-392 (SSNN…SAAY) and 407-425 (TNFY…QSSQ). Basic and acidic residues predominate over residues 426-444 (SDERPETFELPHVAKDHWL). The segment covering 446–457 (RPTSERSTQSTK) has biased composition (polar residues).

The protein resides in the cytoplasm. It is found in the cytoskeleton. The protein localises to the microtubule organizing center. It localises to the spindle pole body. Its function is as follows. Plays a role in mitotic spindle pole body organization, possibly at the point of spindle pole body separation. Required for mitotic exit. The polypeptide is Spindle pole body protein CSA6 (Candida albicans (strain SC5314 / ATCC MYA-2876) (Yeast)).